Here is a 403-residue protein sequence, read N- to C-terminus: Dynactin subunit 2-A (403 aa).

Residues 1-26 (MADPKYADLPGIARNEPDVYETSDLP) form a disordered region. A coiled-coil region spans residues 99–132 (PQQKYQRLLHEVQELTQEVEKTQSTVKESAAEEK). Positions 183 to 203 (AAKTRKNPEGKSPAKGPGPDT) are disordered. Positions 381–401 (KENLATVEDNFSNIDGRIKKL) form a coiled coil.

This sequence belongs to the dynactin subunit 2 family. In terms of assembly, subunit of dynactin, a multiprotein complex part of a tripartite complex with dynein and a adapter, such as BICDL1, BICD2 or HOOK3. The dynactin complex is built around ACTR1A/ACTB filament and consists of an actin-related filament composed of a shoulder domain, a pointed end and a barbed end. Its length is defined by its flexible shoulder domain. The soulder is composed of 2 DCTN1 subunits, 4 DCTN2 and 2 DCTN3.

It localises to the cytoplasm. Its subcellular location is the cytoskeleton. The protein resides in the microtubule organizing center. It is found in the centrosome. The protein localises to the membrane. Its function is as follows. Part of the dynactin complex that activates the molecular motor dynein for ultra-processive transport along microtubules. In the dynactin soulder domain, binds the ACTR1A filament and acts as a molecular ruler to determine the length. Modulates cytoplasmic dynein binding to an organelle, and plays a role in prometaphase chromosome alignment and spindle organization during mitosis. Involved in anchoring microtubules to centrosomes. The sequence is that of Dynactin subunit 2-A (dctn2-a) from Xenopus laevis (African clawed frog).